A 796-amino-acid polypeptide reads, in one-letter code: Bud site selection protein 27 (796 aa).

Positions 81–121 (KEEAITFVDDKLKLMEDAIEQFNLKIEEAKKTLDNLNHMED) form a coiled coil. The span at 152–168 (VISSSVTPTTKQPSQSN) shows a compositional bias: polar residues. 5 disordered regions span residues 152–197 (VISS…EENL), 300–344 (LRAQ…QVGF), 421–458 (EGEA…TTRS), 535–624 (EKEP…AKTG), and 752–796 (ATAS…DSKP). Composition is skewed to basic and acidic residues over residues 169 to 197 (SKKE…EENL) and 306 to 318 (SQDH…DVNK). Over residues 427–441 (SNRRTRVSRFRKDRA) the composition is skewed to basic residues. Positions 535 to 550 (EKEPEINSKSEFETPF) are enriched in basic and acidic residues. Residues 551-568 (KKKKLKSLQKPRSSKSMK) show a composition bias toward basic residues. Residues 579–589 (ISDDDYDDDDD) show a composition bias toward acidic residues. S580 bears the Phosphoserine mark. The segment covering 601–610 (NNTDEQDKFP) has biased composition (basic and acidic residues).

The protein belongs to the prefoldin subunit alpha family.

It is found in the cytoplasm. Functionally, involved in gene expression controlled by TOR kinase and nutrient signaling. May also be involved in positioning the proximal bud pole signal. The protein is Bud site selection protein 27 (BUD27) of Saccharomyces cerevisiae (strain ATCC 204508 / S288c) (Baker's yeast).